The chain runs to 3916 residues: Fusarin C synthetase (3916 aa).

In terms of domain architecture, Ketosynthase family 3 (KS3) spans 9-440 (KEPIAIIGTS…GTNVHAIIEQ (432 aa)). Catalysis depends on for beta-ketoacyl synthase activity residues Cys-182, His-319, and His-360. A malonyl-CoA:ACP transacylase (MAT) domain region spans residues 548–866 (VFTGQGAQWP…QGTVARNIHD (319 aa)). An N-terminal hotdog fold region spans residues 935–1068 (HPLLGARSVE…GQLRVEFGCS (134 aa)). The dehydratase (DH) domain stretch occupies residues 935-1228 (HPLLGARSVE…GLTCTSLLRP (294 aa)). The PKS/mFAS DH domain maps to 935 to 1231 (HPLLGARSVE…CTSLLRPGPS (297 aa)). Residue His-967 is the Proton acceptor; for dehydratase activity of the active site. A C-terminal hotdog fold region spans residues 1084 to 1231 (LTSVNMERFY…CTSLLRPGPS (148 aa)). The Proton donor; for dehydratase activity role is filled by Asp-1141. Residues 1347–1575 (IQAVGENLPS…VNDFVDAEKY (229 aa)) form a C-methyltransferase (CMeT) domain region. A ketoreductase (KR) domain 1 region spans residues 2092–2266 (TYLLIGCTGG…AASVMHIGMV (175 aa)). In terms of domain architecture, Carrier 1 spans 2372-2449 (EILAVVEEEF…ELCSTVVSHL (78 aa)). The residue at position 2409 (Ser-2409) is an O-(pantetheine 4'-phosphoryl)serine. A disordered region spans residues 2487 to 2510 (NEPFTIRNSPNSTQVTSEAGVDED). Positions 2492–2503 (IRNSPNSTQVTS) are enriched in polar residues. A condensation region spans residues 2522–2806 (PLSFAQERLW…VNLLPLRLKI (285 aa)). Positions 2975–3385 (EFVVKQPDDT…RIAGDSQIKL (411 aa)) are adenylation. The 78-residue stretch at 3493–3570 (KPLTETQERL…EMAAKIDGST (78 aa)) folds into the Carrier 2 domain. O-(pantetheine 4'-phosphoryl)serine is present on Ser-3530. Residues 3612-3833 (LTGATGFLGV…DFVPVDVVAA (222 aa)) are thiolester reductase (R) domain.

The protein in the C-terminal section; belongs to the NRP synthetase family.

The protein operates within mycotoxin biosynthesis. In terms of biological role, fusarin C synthetase; part of the gene cluster that mediates the biosynthesis of the mycotoxin fusarin C. Within the cluster, FUS1, FUS2, FUS8 and FUS9 are sufficient for fusarin production. The roles of the other FUS members are yet undetermined. The fusarin C synthetase FUS1 is responsible for the condensation of one acetyl-coenzyme A (CoA) unit with six malonyl-CoA units and the amide linkage of the arising heptaketide and homoserine, subsequently releasing the first intermediate, prefusarin, as an alcohol with an open ring structure. The cytochrome P450 monooxygenase FUS8 participates in multiple oxidation processes at carbon C-20 and is able to use the FUS1 product as substrate, resulting in formation of 20-hydroxy-prefusarin. This reaction seems to be essential before the 2-pyrrolidone ring closure can be catalyzed by FUS2, generating 20-hydroxy-fusarin. FUS8 is able to further oxidizes carbon C-20 after ring closure, resulting in the formation of carboxy-fusarin C. As the last step, FUS9 methylates the hydroxyl group at C-21 to generate fusarin C. Fusarin C can then rearrange to epi-fusarin C, the (z)-isomers, and fusarin A and fusarin D. The sequence is that of Fusarin C synthetase from Gibberella fujikuroi (strain CBS 195.34 / IMI 58289 / NRRL A-6831) (Bakanae and foot rot disease fungus).